A 604-amino-acid polypeptide reads, in one-letter code: Glutamyl-tRNA(Gln) amidotransferase subunit B, mitochondrial (604 aa).

Residues 1 to 48 (MIRQCLSRRGAYSRYRLAARGVELAEPFHHQSSRPQGRRNWSSSPRCS) constitute a mitochondrion transit peptide. A disordered region spans residues 28-57 (FHHQSSRPQGRRNWSSSPRCSLDIRTDTPR). The span at 33–46 (SRPQGRRNWSSSPR) shows a compositional bias: polar residues.

This sequence belongs to the GatB/GatE family. GatB subfamily. In terms of assembly, subunit of the heterotrimeric GatCAB amidotransferase (AdT) complex, composed of A, B and C subunits.

Its subcellular location is the mitochondrion. It catalyses the reaction L-glutamyl-tRNA(Gln) + L-glutamine + ATP + H2O = L-glutaminyl-tRNA(Gln) + L-glutamate + ADP + phosphate + H(+). Functionally, allows the formation of correctly charged Gln-tRNA(Gln) through the transamidation of misacylated Glu-tRNA(Gln) in the mitochondria. The reaction takes place in the presence of glutamine and ATP through an activated gamma-phospho-Glu-tRNA(Gln). The polypeptide is Glutamyl-tRNA(Gln) amidotransferase subunit B, mitochondrial (Blastomyces gilchristii (strain SLH14081) (Blastomyces dermatitidis)).